A 464-amino-acid polypeptide reads, in one-letter code: Growth hormone-releasing hormone receptor (464 aa).

A signal peptide spans 1–22; that stretch reads MDSLLWATWVLCLLNLWGVALG. At 23 to 130 the chain is on the extracellular side; sequence HLHLECDFIT…EEKSYFSTVK (108 aa). Intrachain disulfides connect cysteine 41/cysteine 64, cysteine 55/cysteine 96, and cysteine 78/cysteine 112. Asparagine 50 carries an N-linked (GlcNAc...) asparagine glycan. The helical transmembrane segment at 131–151 threads the bilayer; that stretch reads IIYTTGHSISIVALCVAIAIL. Residues 152 to 167 lie on the Cytoplasmic side of the membrane; sequence VALRRLHCPRNYIHTQ. The chain crosses the membrane as a helical span at residues 168-188; that stretch reads LFATFILKASAVFLKDAAVFQ. The Extracellular segment spans residues 189–210; the sequence is GDSTDHCSMSTILCKVSVAVSH. A helical membrane pass occupies residues 211 to 231; it reads FATMTNFSWLLAEAVYLSCLL. Residues 232-240 lie on the Cytoplasmic side of the membrane; the sequence is ASTSPRSKP. A helical transmembrane segment spans residues 241–261; sequence AFWWLVLAGWGLPVLCTGTWV. Over 262-283 the chain is Extracellular; sequence GCKLAFEDTACWDLDDSSPYWW. The chain crosses the membrane as a helical span at residues 284–304; the sequence is IIKGPIVLSVGVNFGLFLNII. Over 305–372 the chain is Cytoplasmic; sequence CILLRKLGPA…QLPWRLSKST (68 aa). Residues 373-393 form a helical membrane-spanning segment; it reads LLLIPLFGIHYIIFNFLPDSA. The Extracellular portion of the chain corresponds to 394 to 398; that stretch reads GLGIR. The chain crosses the membrane as a helical span at residues 399 to 419; it reads LPLELGLGSFQGFVVAVLYCF. Topologically, residues 420–464 are cytoplasmic; that stretch reads LNQEVRTEISRKWYGHDPELLPARRTCTEWTTPPRSRVKVLTSEC.

It belongs to the G-protein coupled receptor 2 family. As to expression, pituitary gland.

It localises to the cell membrane. Receptor for GRF, coupled to G proteins which activate adenylyl cyclase. Stimulates somatotroph cell growth, growth hormone gene transcription and growth hormone secretion. The sequence is that of Growth hormone-releasing hormone receptor (Ghrhr) from Rattus norvegicus (Rat).